We begin with the raw amino-acid sequence, 154 residues long: uncharacterized protein (154 aa).

A disordered region spans residues 104-124 (NNNNNDNDNNNKEKEDNDEKE). A compositionally biased stretch (basic and acidic residues) spans 112-124 (NNNKEKEDNDEKE).

This is an uncharacterized protein from Dictyostelium discoideum (Social amoeba).